Consider the following 220-residue polypeptide: Thymidylate kinase (220 aa).

10–17 (GIDGCGKS) is a binding site for ATP.

This sequence belongs to the thymidylate kinase family.

The enzyme catalyses dTMP + ATP = dTDP + ADP. Phosphorylation of dTMP to form dTDP in both de novo and salvage pathways of dTTP synthesis. In Prochlorococcus marinus (strain SARG / CCMP1375 / SS120), this protein is Thymidylate kinase.